We begin with the raw amino-acid sequence, 602 residues long: Elongation factor 4 (602 aa).

The 182-residue stretch at Glu7–Lys188 folds into the tr-type G domain. Residues Asp19–Thr24 and Asn135–Asp138 contribute to the GTP site.

The protein belongs to the TRAFAC class translation factor GTPase superfamily. Classic translation factor GTPase family. LepA subfamily.

Its subcellular location is the cell inner membrane. It carries out the reaction GTP + H2O = GDP + phosphate + H(+). Required for accurate and efficient protein synthesis under certain stress conditions. May act as a fidelity factor of the translation reaction, by catalyzing a one-codon backward translocation of tRNAs on improperly translocated ribosomes. Back-translocation proceeds from a post-translocation (POST) complex to a pre-translocation (PRE) complex, thus giving elongation factor G a second chance to translocate the tRNAs correctly. Binds to ribosomes in a GTP-dependent manner. The chain is Elongation factor 4 from Chlamydia caviae (strain ATCC VR-813 / DSM 19441 / 03DC25 / GPIC) (Chlamydophila caviae).